Consider the following 1249-residue polypeptide: Myosin-1 (1249 aa).

Residues 1–40 (MGHSRRPAGGEKKSRFGRSKAAADVGDGRQAGGKPQVRKA) form a disordered region. In terms of domain architecture, Myosin motor spans 50–729 (IGVSDLTLLS…TLFALEAMRD (680 aa)). Position 143-150 (143-150 (GESGAGKT)) interacts with ATP. Serine 371 bears the Phosphoserine mark. The tract at residues 418-500 (SIGILDIYGF…PGVFAALNDA (83 aa)) is actin-binding. 2 IQ domains span residues 733-753 (HNMAIRIQRAWRNYLRYRTEC) and 754-779 (AIRIQRFWRRMNGGLELLKLRDQGHT). Residues 787–979 (RRRMSILGSR…PGEPPNSVSK (193 aa)) form the TH1 domain. 2 disordered regions span residues 959-1081 (DSYK…KAKA) and 1127-1249 (EAYL…DDDW). Low complexity-rich tracts occupy residues 1026–1035 (PQTAAAQPTP) and 1043–1061 (PVAAVAASHSRTSSTASAR). Positions 1062–1073 (APPPPPPAPPAA) are enriched in pro residues. One can recognise an SH3 domain in the interval 1074–1135 (AGPKKAKALY…PEAYLEEQVA (62 aa)). Residues 1137 to 1149 (TPKPAPPPPPPVA) are compositionally biased toward pro residues. Residues 1150-1170 (PRASPAPVNGSAAVAAAKAKA) are compositionally biased toward low complexity. Residues 1199-1221 (VSMNSQGDSSGASGRGTPSSVSN) show a composition bias toward polar residues. Residues 1222–1235 (ASLAGGLAEALRAR) are compositionally biased toward low complexity.

This sequence belongs to the TRAFAC class myosin-kinesin ATPase superfamily. Myosin family. As to quaternary structure, interacts (via IQ domains) with camA. Phosphorylation of the TEDS site (Ser-371) is required for the polarization of the actin cytoskeleton. Phosphorylation probably activates the myosin-I ATPase activity.

It is found in the cytoplasm. The protein localises to the cytoskeleton. It localises to the actin patch. In terms of biological role, type-I myosin implicated in the organization of the actin cytoskeleton. Required for proper actin cytoskeleton polarization. At the cell cortex, assembles in patch-like structures together with proteins from the actin-polymerizing machinery and promotes actin assembly. Functions as actin nucleation-promoting factor (NPF) for the Arp2/3 complex. Plays an important role in polarized growth, spore germination, hyphal morphogenesis, and septal wall formation. This Emericella nidulans (strain FGSC A4 / ATCC 38163 / CBS 112.46 / NRRL 194 / M139) (Aspergillus nidulans) protein is Myosin-1 (myoA).